The following is a 507-amino-acid chain: Probable D-lactate dehydrogenase, mitochondrial (507 aa).

The N-terminal 52 residues, 1–52 (MARLLRSATWELFPWRGYCSQKAKGELCRDFVEALKAVVGGSHVSTAAVVRE), are a transit peptide targeting the mitochondrion. N6-acetyllysine is present on lysine 36. The region spanning 62-265 (RCEPPDAVVW…TATTLRLHPA (204 aa)) is the FAD-binding PCMH-type domain. An N6-acetyllysine modification is found at lysine 315. Lysine 358 carries the N6-acetyllysine; alternate modification. Lysine 358 carries the N6-succinyllysine; alternate modification. N6-acetyllysine is present on residues lysine 445 and lysine 472.

This sequence belongs to the FAD-binding oxidoreductase/transferase type 4 family. Interacts with CSRP3. FAD is required as a cofactor. As to expression, expressed moderately in heart and liver and at lower levels in skeletal muscle and kidney.

The protein resides in the mitochondrion. The enzyme catalyses (R)-lactate + 2 Fe(III)-[cytochrome c] = 2 Fe(II)-[cytochrome c] + pyruvate + 2 H(+). Functionally, involved in D-lactate, but not L-lactate catabolic process. This Homo sapiens (Human) protein is Probable D-lactate dehydrogenase, mitochondrial.